The following is a 215-amino-acid chain: Thiamine-phosphate synthase (215 aa).

Residues 40–44 (QLRIK) and Asn72 contribute to the 4-amino-2-methyl-5-(diphosphooxymethyl)pyrimidine site. Mg(2+) contacts are provided by Asp73 and Asp92. 4-amino-2-methyl-5-(diphosphooxymethyl)pyrimidine is bound at residue Ser111. 137–139 (TTT) contributes to the 2-[(2R,5Z)-2-carboxy-4-methylthiazol-5(2H)-ylidene]ethyl phosphate binding site. Lys140 serves as a coordination point for 4-amino-2-methyl-5-(diphosphooxymethyl)pyrimidine. 2-[(2R,5Z)-2-carboxy-4-methylthiazol-5(2H)-ylidene]ethyl phosphate is bound by residues Gly169 and 189–190 (VS).

Belongs to the thiamine-phosphate synthase family. Mg(2+) serves as cofactor.

The catalysed reaction is 2-[(2R,5Z)-2-carboxy-4-methylthiazol-5(2H)-ylidene]ethyl phosphate + 4-amino-2-methyl-5-(diphosphooxymethyl)pyrimidine + 2 H(+) = thiamine phosphate + CO2 + diphosphate. It catalyses the reaction 2-(2-carboxy-4-methylthiazol-5-yl)ethyl phosphate + 4-amino-2-methyl-5-(diphosphooxymethyl)pyrimidine + 2 H(+) = thiamine phosphate + CO2 + diphosphate. The enzyme catalyses 4-methyl-5-(2-phosphooxyethyl)-thiazole + 4-amino-2-methyl-5-(diphosphooxymethyl)pyrimidine + H(+) = thiamine phosphate + diphosphate. It functions in the pathway cofactor biosynthesis; thiamine diphosphate biosynthesis; thiamine phosphate from 4-amino-2-methyl-5-diphosphomethylpyrimidine and 4-methyl-5-(2-phosphoethyl)-thiazole: step 1/1. Its function is as follows. Condenses 4-methyl-5-(beta-hydroxyethyl)thiazole monophosphate (THZ-P) and 2-methyl-4-amino-5-hydroxymethyl pyrimidine pyrophosphate (HMP-PP) to form thiamine monophosphate (TMP). The polypeptide is Thiamine-phosphate synthase (Proteus mirabilis (strain HI4320)).